The sequence spans 401 residues: Acetate kinase (401 aa).

Mg(2+) is bound at residue asparagine 7. Lysine 14 is a binding site for ATP. Arginine 91 lines the substrate pocket. Aspartate 148 acts as the Proton donor/acceptor in catalysis. Residues 208-212 (HLGNG), 283-285 (DFR), and 332-336 (GVGEN) contribute to the ATP site. A Mg(2+)-binding site is contributed by glutamate 385.

The protein belongs to the acetokinase family. In terms of assembly, homodimer. The cofactor is Mg(2+). It depends on Mn(2+) as a cofactor.

It localises to the cytoplasm. It catalyses the reaction acetate + ATP = acetyl phosphate + ADP. It functions in the pathway metabolic intermediate biosynthesis; acetyl-CoA biosynthesis; acetyl-CoA from acetate: step 1/2. Its function is as follows. Catalyzes the formation of acetyl phosphate from acetate and ATP. Can also catalyze the reverse reaction. The polypeptide is Acetate kinase (Caldanaerobacter subterraneus subsp. tengcongensis (strain DSM 15242 / JCM 11007 / NBRC 100824 / MB4) (Thermoanaerobacter tengcongensis)).